A 159-amino-acid chain; its full sequence is 2-C-methyl-D-erythritol 2,4-cyclodiphosphate synthase (159 aa).

Residues Asp-10 and His-12 each contribute to the a divalent metal cation site. 4-CDP-2-C-methyl-D-erythritol 2-phosphate contacts are provided by residues 10–12 (DVH) and 37–38 (HS). His-45 provides a ligand contact to a divalent metal cation. 4-CDP-2-C-methyl-D-erythritol 2-phosphate is bound by residues 59-61 (DIG), 64-68 (FLDTD), 103-109 (AQAPKML), 135-138 (TTTE), Phe-142, and Arg-145.

It belongs to the IspF family. In terms of assembly, homotrimer. The cofactor is a divalent metal cation.

The enzyme catalyses 4-CDP-2-C-methyl-D-erythritol 2-phosphate = 2-C-methyl-D-erythritol 2,4-cyclic diphosphate + CMP. It functions in the pathway isoprenoid biosynthesis; isopentenyl diphosphate biosynthesis via DXP pathway; isopentenyl diphosphate from 1-deoxy-D-xylulose 5-phosphate: step 4/6. Functionally, involved in the biosynthesis of isopentenyl diphosphate (IPP) and dimethylallyl diphosphate (DMAPP), two major building blocks of isoprenoid compounds. Catalyzes the conversion of 4-diphosphocytidyl-2-C-methyl-D-erythritol 2-phosphate (CDP-ME2P) to 2-C-methyl-D-erythritol 2,4-cyclodiphosphate (ME-CPP) with a corresponding release of cytidine 5-monophosphate (CMP). This Francisella tularensis subsp. tularensis (strain FSC 198) protein is 2-C-methyl-D-erythritol 2,4-cyclodiphosphate synthase.